The chain runs to 419 residues: Gamma-glutamyl phosphate reductase (419 aa).

It belongs to the gamma-glutamyl phosphate reductase family.

It localises to the cytoplasm. It catalyses the reaction L-glutamate 5-semialdehyde + phosphate + NADP(+) = L-glutamyl 5-phosphate + NADPH + H(+). Its pathway is amino-acid biosynthesis; L-proline biosynthesis; L-glutamate 5-semialdehyde from L-glutamate: step 2/2. Catalyzes the NADPH-dependent reduction of L-glutamate 5-phosphate into L-glutamate 5-semialdehyde and phosphate. The product spontaneously undergoes cyclization to form 1-pyrroline-5-carboxylate. This chain is Gamma-glutamyl phosphate reductase, found in Bordetella avium (strain 197N).